Consider the following 370-residue polypeptide: Cobalt-precorrin-5B C(1)-methyltransferase (370 aa).

The protein belongs to the CbiD family.

The enzyme catalyses Co-precorrin-5B + S-adenosyl-L-methionine = Co-precorrin-6A + S-adenosyl-L-homocysteine. It participates in cofactor biosynthesis; adenosylcobalamin biosynthesis; cob(II)yrinate a,c-diamide from sirohydrochlorin (anaerobic route): step 6/10. Functionally, catalyzes the methylation of C-1 in cobalt-precorrin-5B to form cobalt-precorrin-6A. This chain is Cobalt-precorrin-5B C(1)-methyltransferase, found in Prochlorococcus marinus (strain MIT 9215).